The primary structure comprises 159 residues: Large ribosomal subunit protein mL50 (159 aa).

It belongs to the mitochondrion-specific ribosomal protein mL50 family. In terms of assembly, component of the mitochondrial ribosome large subunit (39S) which comprises a 16S rRNA and about 50 distinct proteins.

The protein resides in the mitochondrion. This Mus musculus (Mouse) protein is Large ribosomal subunit protein mL50 (Mrpl50).